We begin with the raw amino-acid sequence, 321 residues long: MLNKLVECENLTFEESYELFNMLLEESEIRIAAYLTALQTKGVTADEIAGFAKAMRDNAVKIDLGEVTDTCGTGGDGSKTINVSTAVSIILACFTKVAKHGNVSVTSKSGSANVYEALGCKILENPDEAKVSIEKTNFAFLFAPKYHPALKKIMPVRSELKIKTVFNILGPLANPANPKYQILGVNSPELSEKVANALSKVGGVKKALVINGNGLDELNPNGASKITEYNGKFETYEITPEDFGLENTKIIPCESPNESARRLIDVFSGKINEDRNFILMNAGAALYASEIVSDFLEGVEIAKNAIDSGKVLKKLEMIKNV.

5-phospho-alpha-D-ribose 1-diphosphate-binding positions include Gly-72, 75–76, Thr-80, 82–85, 99–107, and Ser-111; these read GD, NVST, and KHGNVSVTS. Gly-72 lines the anthranilate pocket. Residue Ser-84 participates in Mg(2+) binding. Asn-102 lines the anthranilate pocket. Arg-157 lines the anthranilate pocket. Positions 216 and 217 each coordinate Mg(2+).

The protein belongs to the anthranilate phosphoribosyltransferase family. In terms of assembly, homodimer. Requires Mg(2+) as cofactor.

The catalysed reaction is N-(5-phospho-beta-D-ribosyl)anthranilate + diphosphate = 5-phospho-alpha-D-ribose 1-diphosphate + anthranilate. Its pathway is amino-acid biosynthesis; L-tryptophan biosynthesis; L-tryptophan from chorismate: step 2/5. Catalyzes the transfer of the phosphoribosyl group of 5-phosphorylribose-1-pyrophosphate (PRPP) to anthranilate to yield N-(5'-phosphoribosyl)-anthranilate (PRA). In Methanococcus vannielii (strain ATCC 35089 / DSM 1224 / JCM 13029 / OCM 148 / SB), this protein is Anthranilate phosphoribosyltransferase.